A 290-amino-acid polypeptide reads, in one-letter code: Porphobilinogen deaminase (290 aa).

S-(dipyrrolylmethanemethyl)cysteine is present on C238.

Belongs to the HMBS family. As to quaternary structure, monomer. It depends on dipyrromethane as a cofactor.

The catalysed reaction is 4 porphobilinogen + H2O = hydroxymethylbilane + 4 NH4(+). Its pathway is porphyrin-containing compound metabolism; protoporphyrin-IX biosynthesis; coproporphyrinogen-III from 5-aminolevulinate: step 2/4. Its function is as follows. Tetrapolymerization of the monopyrrole PBG into the hydroxymethylbilane pre-uroporphyrinogen in several discrete steps. The chain is Porphobilinogen deaminase from Clostridium botulinum (strain Eklund 17B / Type B).